The primary structure comprises 281 residues: Large ribosomal subunit protein uL2 (281 aa).

Residues 222-281 (TVRGSVMNPNDHPHGGGEGRTPIGRKSPVTPWGKKALGVKTRNTKKPSEKLIVRKRNAKK) form a disordered region.

Belongs to the universal ribosomal protein uL2 family. As to quaternary structure, part of the 50S ribosomal subunit. Forms a bridge to the 30S subunit in the 70S ribosome.

Its function is as follows. One of the primary rRNA binding proteins. Required for association of the 30S and 50S subunits to form the 70S ribosome, for tRNA binding and peptide bond formation. It has been suggested to have peptidyltransferase activity; this is somewhat controversial. Makes several contacts with the 16S rRNA in the 70S ribosome. The chain is Large ribosomal subunit protein uL2 from Mesoplasma florum (strain ATCC 33453 / NBRC 100688 / NCTC 11704 / L1) (Acholeplasma florum).